The following is a 610-amino-acid chain: Elongation factor 4 (610 aa).

One can recognise a tr-type G domain in the interval 15 to 197 (KSIRNFSIIA…RIINDIPYPK (183 aa)). GTP contacts are provided by residues 27 to 32 (DHGKST) and 144 to 147 (NKID).

The protein belongs to the TRAFAC class translation factor GTPase superfamily. Classic translation factor GTPase family. LepA subfamily.

The protein localises to the cell membrane. The catalysed reaction is GTP + H2O = GDP + phosphate + H(+). Required for accurate and efficient protein synthesis under certain stress conditions. May act as a fidelity factor of the translation reaction, by catalyzing a one-codon backward translocation of tRNAs on improperly translocated ribosomes. Back-translocation proceeds from a post-translocation (POST) complex to a pre-translocation (PRE) complex, thus giving elongation factor G a second chance to translocate the tRNAs correctly. Binds to ribosomes in a GTP-dependent manner. The sequence is that of Elongation factor 4 from Buchnera aphidicola subsp. Acyrthosiphon pisum (strain APS) (Acyrthosiphon pisum symbiotic bacterium).